Consider the following 485-residue polypeptide: Glutamate mutase epsilon subunit (485 aa).

R66 is an L-glutamate binding site. Residue G68 coordinates adenosylcob(III)alamin. R100 is a binding site for L-glutamate. N123 is a binding site for adenosylcob(III)alamin. Residues 149–150 (RH), E171, and Y177 contribute to the L-glutamate site. P180 is an adenosylcob(III)alamin binding site. Position 181 (Y181) interacts with L-glutamate. Residues F297, K326, E330, and I334 each coordinate adenosylcob(III)alamin.

Belongs to the methylaspartate mutase GlmE subunit family. Heterotetramer composed of 2 epsilon subunits (GlmE) and 2 sigma subunits (GlmS). GlmE exists as a homodimer and GlmS as a monomer. Requires adenosylcob(III)alamin as cofactor.

It catalyses the reaction (2S,3S)-3-methyl-L-aspartate = L-glutamate. The protein operates within amino-acid degradation; L-glutamate degradation via mesaconate pathway; acetate and pyruvate from L-glutamate: step 1/4. In terms of biological role, catalyzes the carbon skeleton rearrangement of L-glutamate to L-threo-3-methylaspartate ((2S,3S)-3-methylaspartate). The polypeptide is Glutamate mutase epsilon subunit (Treponema denticola (strain ATCC 35405 / DSM 14222 / CIP 103919 / JCM 8153 / KCTC 15104)).